Reading from the N-terminus, the 651-residue chain is MSGELNGNDTSAQAAVSAGSVLEGAAFADEGEQHNESMKTLVLGALGVVYGDIGTSPIYAFREALHAAATNGILARSDILGVVSLIFWALTLVVTVKYVLFVLRADNNGEGGILSLMALVRGALKGRPDLILGVGICGAALFFGDAVITPAISVLSAMEGLEIVAPNLTPFVVPATVVILVTLFSVQKLGTGRVAIVFGPIMALWFVALGASGLWHIFDDPTVMAALNPYYAVRFLTVSPAVAFVTVGAVFLAMTGAEALYADLGHFGRKPIVRAWLWIVFPCLLLNYFGQAAFILSHGEAAALPFFQMIPSFALWPMVLLATAATVIASQAVITGAYSVARQAVQLNILSRLEIQHTSEKLHGQIYIPRVNLLLGLAVVILVLGFEKSSNLAAAYGIAVTGNMLVTTVLLYIVMTRIWNWRVSRALPIILGFLVIDMLFFSANIIKVHEGGWASIGIATVLVLIMWTWVRGTRHLFQKTRKAEVPLDLIVEQMAKRPPTIVPGTAVFLTGDPKSAPTALMHSLKHYKVLHENNVILTVVTASKPWVASADRARVSQYNERFMLVTLTFGYMQQPNIPRALGLCRRLGWKFDIMTTSFFLSRRSLKASVHSGMPLWQDKLFILLARTASDATEYFQIPTGRVVEIGTQVNI.

The next 12 membrane-spanning stretches (helical) occupy residues L41–F61, V82–V102, L130–P150, I163–L183, V194–L214, F235–T255, W276–L296, M309–A329, I366–F386, A395–M415, A426–I446, and E450–V470.

The protein belongs to the HAK/KUP transporter (TC 2.A.72) family.

It localises to the cell inner membrane. The catalysed reaction is K(+)(in) + H(+)(in) = K(+)(out) + H(+)(out). Functionally, transport of potassium into the cell. Likely operates as a K(+):H(+) symporter. This chain is Probable potassium transport system protein Kup, found in Brucella melitensis biotype 2 (strain ATCC 23457).